The following is a 1515-amino-acid chain: Neurite extension and migration factor (1515 aa).

Over residues 381-405 (DKKKGKEEVHEDKSIETKDEKDNGE) the composition is skewed to basic and acidic residues. Disordered regions lie at residues 381-415 (DKKK…KPCG), 505-529 (VNER…PKKR), 731-774 (KKIK…HMSE), 1158-1225 (FDEP…TKKG), 1372-1422 (TPQE…EDSR), and 1435-1479 (TLGN…AGTT). Polar residues-rich tracts occupy residues 746–757 (SPVSEDTSSKAN) and 763–772 (TPGTSNSSHM). A compositionally biased stretch (low complexity) spans 1180 to 1193 (PGKSGAVSQSSSQK). The span at 1442–1452 (THKKLYRHKSS) shows a compositional bias: basic residues. Residues 1455–1479 (GLRDEKYKGKRVEREQAHKDEAGTT) show a composition bias toward basic and acidic residues.

Expressed in the brain, particularly during the late embryonic and perinatal stages of development. In the developing brain, it is expressed only in the cortical plate and subplate region but not in the intermediate or ventricular zone.

The protein localises to the nucleus. It localises to the cytoplasm. In terms of biological role, involved in neurite outgrowth by regulating cell-cell adhesion via the N-cadherin signaling pathway. May act by regulating expression of protein-coding genes, such as N-cadherins and integrin beta-1 (ITGB1). The chain is Neurite extension and migration factor from Mus musculus (Mouse).